The sequence spans 243 residues: Ubiquinone/menaquinone biosynthesis C-methyltransferase UbiE (243 aa).

Residues threonine 69, aspartate 90, and 116–117 (DA) contribute to the S-adenosyl-L-methionine site.

The protein belongs to the class I-like SAM-binding methyltransferase superfamily. MenG/UbiE family.

It catalyses the reaction a 2-demethylmenaquinol + S-adenosyl-L-methionine = a menaquinol + S-adenosyl-L-homocysteine + H(+). The catalysed reaction is a 2-methoxy-6-(all-trans-polyprenyl)benzene-1,4-diol + S-adenosyl-L-methionine = a 5-methoxy-2-methyl-3-(all-trans-polyprenyl)benzene-1,4-diol + S-adenosyl-L-homocysteine + H(+). The protein operates within quinol/quinone metabolism; menaquinone biosynthesis; menaquinol from 1,4-dihydroxy-2-naphthoate: step 2/2. It participates in cofactor biosynthesis; ubiquinone biosynthesis. In terms of biological role, methyltransferase required for the conversion of demethylmenaquinol (DMKH2) to menaquinol (MKH2) and the conversion of 2-polyprenyl-6-methoxy-1,4-benzoquinol (DDMQH2) to 2-polyprenyl-3-methyl-6-methoxy-1,4-benzoquinol (DMQH2). The polypeptide is Ubiquinone/menaquinone biosynthesis C-methyltransferase UbiE (Burkholderia ambifaria (strain MC40-6)).